A 462-amino-acid chain; its full sequence is UDP-N-acetylmuramoylalanine--D-glutamate ligase (462 aa).

111 to 117 provides a ligand contact to ATP; sequence GTNGKTT.

It belongs to the MurCDEF family.

It localises to the cytoplasm. It carries out the reaction UDP-N-acetyl-alpha-D-muramoyl-L-alanine + D-glutamate + ATP = UDP-N-acetyl-alpha-D-muramoyl-L-alanyl-D-glutamate + ADP + phosphate + H(+). Its pathway is cell wall biogenesis; peptidoglycan biosynthesis. Its function is as follows. Cell wall formation. Catalyzes the addition of glutamate to the nucleotide precursor UDP-N-acetylmuramoyl-L-alanine (UMA). This is UDP-N-acetylmuramoylalanine--D-glutamate ligase from Trichodesmium erythraeum (strain IMS101).